The sequence spans 392 residues: UPF0229 protein CPF_1540 (392 aa).

The tract at residues Val75–Lys100 is disordered. The span at Gly80–Lys94 shows a compositional bias: basic and acidic residues.

The protein belongs to the UPF0229 family.

This Clostridium perfringens (strain ATCC 13124 / DSM 756 / JCM 1290 / NCIMB 6125 / NCTC 8237 / Type A) protein is UPF0229 protein CPF_1540.